An 862-amino-acid chain; its full sequence is Fork head protein homolog 2 (862 aa).

The region spanning 83-152 is the FHA domain; that stretch reads VSIGRNTDPL…NGAKVNFQRT (70 aa). The segment at residues 339–430 is a DNA-binding region (fork-head); the sequence is VKPPHSYATM…QQEFLNKWNT (92 aa). 4 disordered regions span residues 498–528, 611–663, 698–730, and 750–846; these read PSKG…QEQR, SDSA…GTTT, PERG…LQTS, and ESNN…ANAK. The span at 504-520 shows a compositional bias: low complexity; it reads PASQQSQPPVSHQNQSQ. Over residues 611-644 the composition is skewed to polar residues; it reads SDSADKSTNNNGGTKMNLPAISTSSLDENGNLEP. A compositionally biased stretch (low complexity) spans 645 to 655; that stretch reads TTTTSSGNSNS. S708 carries the post-translational modification Phosphoserine. Low complexity predominate over residues 712–726; sequence SNSNNTNNNGANNSN. 2 stretches are compositionally biased toward polar residues: residues 750–770 and 778–788; these read ESNN…NVKS and LQFSSTNNTPA. Positions 804 to 829 are enriched in basic and acidic residues; it reads IKAKENENATSEKDSDSNSNDLETKD. A compositionally biased stretch (polar residues) spans 830 to 844; it reads INSSPLKNQGGSTAN. 2 positions are modified to phosphoserine: S832 and S833.

Interacts with MCM1. Interacts with NDD1. Interacts with the origin recognition complex (ORC) composed of ORC1 to ORC6.

It is found in the nucleus. It localises to the cytoplasm. Its subcellular location is the cytosol. Transcription factor that regulates the expression of the CLB2 cluster of genes during the G2/M phase of the mitotic cell cycle. The CLB2 cluster of genes includes mitotic regulators such as CLB1, CLB2, CDC5 and CDC20 as well as SWI5 and ACE2, transcription factors required for the subsequent temporal wave of cell cycle regulated gene expression in the M/G1 phase interval. Involved in HMRa silencing. FKH1 and FKH2 associate with the coding regions of active genes and influence, in opposing ways, transcriptional elongation and termination, and coordinate early transcription elongation and pre-mRNA processing. Both FKH1 and FKH2 play a role as regulators of lifespan in collaboration with the anaphase-promoting complex (APC), likely through combined regulation of stress response, genomic stability, and cell cycle regulation. FKH1 and FKH2 function also in controlling yeast cell morphology by preventing preudohyphal growth. Acts as a rate-limiting replication origin activator via its interaction with the origin recognition complex (ORC). The sequence is that of Fork head protein homolog 2 from Saccharomyces cerevisiae (strain ATCC 204508 / S288c) (Baker's yeast).